A 339-amino-acid polypeptide reads, in one-letter code: Biotin synthase (339 aa).

The region spanning 55–288 (LSEGALHSCS…GKIIKFAAGR (234 aa)) is the Radical SAM core domain. Residues C73, C77, and C80 each contribute to the [4Fe-4S] cluster site. [2Fe-2S] cluster contacts are provided by C152, C213, and K283.

The protein belongs to the radical SAM superfamily. Biotin synthase family. Homodimer. It depends on [4Fe-4S] cluster as a cofactor. [2Fe-2S] cluster serves as cofactor.

The enzyme catalyses (4R,5S)-dethiobiotin + (sulfur carrier)-SH + 2 reduced [2Fe-2S]-[ferredoxin] + 2 S-adenosyl-L-methionine = (sulfur carrier)-H + biotin + 2 5'-deoxyadenosine + 2 L-methionine + 2 oxidized [2Fe-2S]-[ferredoxin]. Its pathway is cofactor biosynthesis; biotin biosynthesis; biotin from 7,8-diaminononanoate: step 2/2. Its function is as follows. Catalyzes the conversion of dethiobiotin (DTB) to biotin by the insertion of a sulfur atom into dethiobiotin via a radical-based mechanism. This chain is Biotin synthase, found in Chlorobium phaeobacteroides (strain BS1).